Consider the following 156-residue polypeptide: Snaclec A1 (156 aa).

An N-terminal signal peptide occupies residues 1–23; it reads MGRSISVSFGLLVVFLSLSGTGA. 3 disulfides stabilise this stretch: Cys-27–Cys-38, Cys-55–Cys-154, and Cys-129–Cys-146. The C-type lectin domain maps to 34-155; the sequence is HEGHCYKVFN…CGQPYRFTCE (122 aa).

This sequence belongs to the snaclec family. Heterodimer; disulfide-linked. In terms of tissue distribution, expressed by the venom gland.

The protein resides in the secreted. Interferes with one step of hemostasis (modulation of platelet aggregation, or coagulation cascade, for example). This is Snaclec A1 from Macrovipera lebetinus (Levantine viper).